The following is a 170-amino-acid chain: Bifunctional protein PyrR (170 aa).

A PRPP-binding motif is present at residues 90 to 102 (LVLVDDVLMSGRT).

It belongs to the purine/pyrimidine phosphoribosyltransferase family. PyrR subfamily.

It carries out the reaction UMP + diphosphate = 5-phospho-alpha-D-ribose 1-diphosphate + uracil. Functionally, regulates the transcription of the pyrimidine nucleotide (pyr) operon in response to exogenous pyrimidines. Its function is as follows. Also displays a weak uracil phosphoribosyltransferase activity which is not physiologically significant. This chain is Bifunctional protein PyrR, found in Pseudomonas paraeruginosa (strain DSM 24068 / PA7) (Pseudomonas aeruginosa (strain PA7)).